The chain runs to 493 residues: Amino acid permease 2 (493 aa).

Residues Met1–Thr49 are Cytoplasmic-facing. 2 helical membrane passes run Val50–Ala70 and Trp71–Val91. Residues Thr92–Tyr138 are Cytoplasmic-facing. Residues Leu139–Ile159 form a helical membrane-spanning segment. The Extracellular segment spans residues Lys160–His175. Residues Met176 to Pro196 form a helical membrane-spanning segment. Topologically, residues Asp197–Gln200 are cytoplasmic. Residues Ile201 to Ala221 form a helical membrane-spanning segment. Topologically, residues Leu222–Arg253 are extracellular. Residues Thr254–Ile274 form a helical membrane-spanning segment. Topologically, residues Gln275–Lys293 are cytoplasmic. Residues Ile294–Phe314 form a helical membrane-spanning segment. At Gly315 to Ala340 the chain is on the extracellular side. The helical transmembrane segment at Ala341–Ile361 threads the bilayer. The Cytoplasmic segment spans residues Glu362–Arg396. Residues Met397–Phe417 form a helical membrane-spanning segment. The Extracellular segment spans residues Asn418 to Asp419. Residues Val420–Met440 traverse the membrane as a helical segment. The Cytoplasmic segment spans residues Tyr441–Gln458. Residues Met459 to Val479 form a helical membrane-spanning segment. Topologically, residues Met480–Tyr493 are extracellular.

Belongs to the amino acid/polyamine transporter 2 family. Amino acid/auxin permease (AAAP) (TC 2.A.18.2) subfamily. Highly expressed in developing pods. Found in the vascular strands of siliques, cotyledons, leaves and roots, in the inner phloem of stems, and in the funiculi. Lower levels of expression in flowers. Not expressed in seeds.

It is found in the cell membrane. Inhibited by diethylpyrocarbonate (DEPC). Its function is as follows. Amino acid-proton symporter. Stereospecific transporter with a broad specificity for histidine, arginine, glutamate and neutral amino acids, favoring small amino acids such as alanine, asparagine and glutamine. Also accepts large aromatic residues such as phenlalanine or tyrosine. Has a much higher affinity for basic amino acids as compared with AAP1. May function in xylem-to-phloem transfer and in uptake of amino acids assimilated in the green silique tissue. The sequence is that of Amino acid permease 2 (AAP2) from Arabidopsis thaliana (Mouse-ear cress).